We begin with the raw amino-acid sequence, 167 residues long: Phospholipase A and acyltransferase 1 (167 aa).

Over 1 to 138 the chain is Cytoplasmic; it reads MAVNDCFSLT…GEGVSEQANR (138 aa). The region spanning 20-135 is the LRAT domain; that stretch reads LIEVFRPCYQ…LRYGEGVSEQ (116 aa). The active site involves His-30. Residue Cys-119 is the Acyl-thioester intermediate of the active site. Residues 139-159 form a helical membrane-spanning segment; the sequence is AIGTIGLVAAGIDIFTFLGLF. The Lumenal segment spans residues 160–167; sequence PKRQGAKS.

This sequence belongs to the H-rev107 family.

Its subcellular location is the membrane. The protein resides in the cytoplasm. It is found in the nucleus. It carries out the reaction a 1,2-diacyl-sn-glycero-3-phosphocholine + H2O = a 1-acyl-sn-glycero-3-phosphocholine + a fatty acid + H(+). The catalysed reaction is a 1,2-diacyl-sn-glycero-3-phosphocholine + H2O = a 2-acyl-sn-glycero-3-phosphocholine + a fatty acid + H(+). The enzyme catalyses 1,2-dihexadecanoyl-sn-glycero-3-phosphocholine + H2O = 2-hexadecanoyl-sn-glycero-3-phosphocholine + hexadecanoate + H(+). It catalyses the reaction 1,2-dihexadecanoyl-sn-glycero-3-phosphocholine + H2O = 1-hexadecanoyl-sn-glycero-3-phosphocholine + hexadecanoate + H(+). It carries out the reaction 1-hexadecanoyl-2-(5Z,8Z,11Z,14Z-eicosatetraenoyl)-sn-glycero-3-phosphoethanolamine + H2O = 2-(5Z,8Z,11Z,14Z)-eicosatetraenoyl-sn-glycero-3-phosphoethanolamine + hexadecanoate + H(+). The catalysed reaction is 1-hexadecanoyl-2-(5Z,8Z,11Z,14Z-eicosatetraenoyl)-sn-glycero-3-phosphoethanolamine + H2O = 1-hexadecanoyl-sn-glycero-3-phosphoethanolamine + (5Z,8Z,11Z,14Z)-eicosatetraenoate + H(+). The enzyme catalyses 1,2-di-(9Z-octadecenoyl)-sn-glycero-3-phosphoethanolamine + 1,2-dihexadecanoyl-sn-glycero-3-phosphocholine = hexadecanoyl-sn-glycero-3-phosphocholine + N-hexadecanoyl-1,2-di-(9Z-octadecenoyl)-sn-glycero-3-phosphoethanolamine + H(+). It catalyses the reaction 1,2-dihexadecanoyl-sn-glycero-3-phosphocholine + a 2-acyl-sn-glycero-3-phosphocholine = a 1-hexadecanoyl-2-acyl-sn-glycero-3-phosphocholine + 2-hexadecanoyl-sn-glycero-3-phosphocholine. In terms of biological role, exhibits both phospholipase A1/2 and acyltransferase activities. Shows phospholipase A1 (PLA1) and A2 (PLA2) activity, catalyzing the calcium-independent release of fatty acids from the sn-1 or sn-2 position of glycerophospholipids. Shows O-acyltransferase activity, catalyzing the transfer of a fatty acyl group from glycerophospholipid to the hydroxyl group of lysophospholipid. This chain is Phospholipase A and acyltransferase 1, found in Rattus norvegicus (Rat).